A 255-amino-acid polypeptide reads, in one-letter code: Thiazole synthase (255 aa).

The Schiff-base intermediate with DXP role is filled by lysine 96. 1-deoxy-D-xylulose 5-phosphate contacts are provided by residues glycine 157, 183 to 184 (AG), and 205 to 206 (NT).

This sequence belongs to the ThiG family. As to quaternary structure, homotetramer. Forms heterodimers with either ThiH or ThiS.

It localises to the cytoplasm. It carries out the reaction [ThiS sulfur-carrier protein]-C-terminal-Gly-aminoethanethioate + 2-iminoacetate + 1-deoxy-D-xylulose 5-phosphate = [ThiS sulfur-carrier protein]-C-terminal Gly-Gly + 2-[(2R,5Z)-2-carboxy-4-methylthiazol-5(2H)-ylidene]ethyl phosphate + 2 H2O + H(+). It participates in cofactor biosynthesis; thiamine diphosphate biosynthesis. Catalyzes the rearrangement of 1-deoxy-D-xylulose 5-phosphate (DXP) to produce the thiazole phosphate moiety of thiamine. Sulfur is provided by the thiocarboxylate moiety of the carrier protein ThiS. In vitro, sulfur can be provided by H(2)S. This Anoxybacillus flavithermus (strain DSM 21510 / WK1) protein is Thiazole synthase.